The chain runs to 313 residues: MLRRPLLLVLFTVFSTLYAKDLRGVSPPTNESEAEVSPGDDEGPPEPGNEPDVNWRTLTIDPEDCKDKGKDCESLADEGNCLKKLNYAVGNCPWTCRFCKKENGDSKKCKDLAGERHCNGWKVKGDCVRLPDYMMQNCKLSCELCGPETRFKYTDEDVRCPEWAQAGYCSTNTDINLKCPHSCRKYKQRAPASTPYPYPVEALHPYQYRVVLPSVTILQTTTAAPSTQPAETTKAPPNTAAPTAAPTPAPTPAPAPAPTPAPVAPAPQTAPLAGSPPESTPEEQDDNSADESTEIEAGEGGGELCDEKHSSQQ.

The first 19 residues, 1-19, serve as a signal peptide directing secretion; it reads MLRRPLLLVLFTVFSTLYA. The disordered stretch occupies residues 24-56; the sequence is GVSPPTNESEAEVSPGDDEGPPEPGNEPDVNWR. Residues 32-44 are compositionally biased toward acidic residues; that stretch reads SEAEVSPGDDEGP. ShKT domains are found at residues 65–99, 109–145, and 151–186; these read CKDK…CRFC, CKDL…CELC, and FKYT…CRKY. Intrachain disulfides connect Cys-65-Cys-99, Cys-72-Cys-92, Cys-81-Cys-96, Cys-109-Cys-145, Cys-127-Cys-142, Cys-160-Cys-179, and Cys-169-Cys-183. Low complexity predominate over residues 222–244; the sequence is TAAPSTQPAETTKAPPNTAAPTA. Positions 222–313 are disordered; sequence TAAPSTQPAE…LCDEKHSSQQ (92 aa). The span at 245–265 shows a compositional bias: pro residues; that stretch reads APTPAPTPAPAPAPTPAPVAP. Acidic residues predominate over residues 280–297; it reads TPEEQDDNSADESTEIEA.

The protein belongs to the NEP3 family. In terms of tissue distribution, nematocytes. In late planulae, is only expressed in a handful of nematocytes in the lower pharynx. Is absent from the tentacles and outer body wall.

The protein localises to the nematocyst. It is found in the secreted. Probable toxin probably only used for predation. The polypeptide is Nematocyst expressed protein 8 (Nematostella vectensis (Starlet sea anemone)).